A 439-amino-acid polypeptide reads, in one-letter code: Serine hydroxymethyltransferase (439 aa).

(6S)-5,6,7,8-tetrahydrofolate is bound by residues leucine 119 and 123–125; that span reads GHL. Position 228 is an N6-(pyridoxal phosphate)lysine (lysine 228). Residue 370–372 coordinates (6S)-5,6,7,8-tetrahydrofolate; it reads SPF.

Belongs to the SHMT family. As to quaternary structure, homodimer. The cofactor is pyridoxal 5'-phosphate.

It is found in the cytoplasm. The enzyme catalyses (6R)-5,10-methylene-5,6,7,8-tetrahydrofolate + glycine + H2O = (6S)-5,6,7,8-tetrahydrofolate + L-serine. It functions in the pathway one-carbon metabolism; tetrahydrofolate interconversion. Its pathway is amino-acid biosynthesis; glycine biosynthesis; glycine from L-serine: step 1/1. Its function is as follows. Catalyzes the reversible interconversion of serine and glycine with tetrahydrofolate (THF) serving as the one-carbon carrier. This reaction serves as the major source of one-carbon groups required for the biosynthesis of purines, thymidylate, methionine, and other important biomolecules. Also exhibits THF-independent aldolase activity toward beta-hydroxyamino acids, producing glycine and aldehydes, via a retro-aldol mechanism. The protein is Serine hydroxymethyltransferase of Chlorobium phaeobacteroides (strain BS1).